A 671-amino-acid chain; its full sequence is Oviduct-specific glycoprotein (671 aa).

Positions 1-21 (MGRLLLWVGLVLLMKPNDGTA) are cleaved as a signal peptide. The GH18 domain occupies 22–385 (YKLVCYFTNW…HILNELLVRA (364 aa)). Cysteines 26 and 51 form a disulfide. Chitin-binding positions include 71 to 72 (LQ), 98 to 101 (GGWN), Tyr142, 211 to 214 (LSYD), and Trp355. An N-linked (GlcNAc...) asparagine glycan is attached at Asn402. 8 consecutive repeat copies span residues 490 to 504 (TGMT…AGRE), 505 to 519 (TMTT…PGGE), 520 to 534 (TMTT…PGGE), 535 to 549 (TVTT…PGGE), 550 to 564 (TMTT…PGGE), 565 to 579 (TVTI…PVGE), 580 to 594 (TVTI…PGGQ), and 595 to 609 (TTAT…PPGM). Positions 490 to 609 (TGMTVTVQTQ…GSQSVTPPGM (120 aa)) are 8 X 15 AA tandem repeats. N-linked (GlcNAc...) asparagine glycosylation is found at Asn511, Asn526, Asn541, Asn556, Asn571, and Asn586.

The protein belongs to the glycosyl hydrolase 18 family. Highly O-glycosylated and also N-glycosylated. As to expression, oviduct.

It localises to the cytoplasmic vesicle. The protein resides in the secretory vesicle. In terms of biological role, binds to oocyte zona pellucida in vivo. May play a role in the fertilization process and/or early embryonic development. Might act as a protective secretion influencing the first steps of the reproductive process necessary for the normal triggering of fertilization and early embryonic development. This is Oviduct-specific glycoprotein (OVGP1) from Mesocricetus auratus (Golden hamster).